Consider the following 483-residue polypeptide: Regulatory protein ViaA (483 aa).

This sequence belongs to the ViaA family. Homodimer. Interacts with RavA.

The protein resides in the cytoplasm. In terms of biological role, component of the RavA-ViaA chaperone complex, which may act on the membrane to optimize the function of some of the respiratory chains. ViaA stimulates the ATPase activity of RavA. This Salmonella heidelberg (strain SL476) protein is Regulatory protein ViaA.